Here is a 91-residue protein sequence, read N- to C-terminus: Large ribosomal subunit protein bL27 (91 aa).

The segment at 1–22 is disordered; the sequence is MAHKKAGGSSRNGRDSAGRRLG.

This sequence belongs to the bacterial ribosomal protein bL27 family.

The sequence is that of Large ribosomal subunit protein bL27 from Methylocella silvestris (strain DSM 15510 / CIP 108128 / LMG 27833 / NCIMB 13906 / BL2).